The primary structure comprises 388 residues: Mannitol-1-phosphate 5-dehydrogenase (388 aa).

Residue 5-16 (AIQFGGGNIGRG) participates in NAD(+) binding. Residue K213 is part of the active site.

This sequence belongs to the mannitol dehydrogenase family. As to quaternary structure, monomer.

The catalysed reaction is D-mannitol 1-phosphate + NAD(+) = beta-D-fructose 6-phosphate + NADH + H(+). Its function is as follows. Catalyzes the NAD(H)-dependent interconversion of D-fructose 6-phosphate and D-mannitol 1-phosphate in the mannitol metabolic pathway. Has a strong preference for NADH over NADPH. Required for protection of conidiospores against exogenous stresses such as high temperatures and an oxidative environment. The chain is Mannitol-1-phosphate 5-dehydrogenase (mpdA) from Aspergillus niger.